We begin with the raw amino-acid sequence, 40 residues long: Photosystem II reaction center protein J (40 aa).

A helical transmembrane segment spans residues 8-28 (IPLWLIGTVTGILVIGLIGFF).

It belongs to the PsbJ family. PSII is composed of 1 copy each of membrane proteins PsbA, PsbB, PsbC, PsbD, PsbE, PsbF, PsbH, PsbI, PsbJ, PsbK, PsbL, PsbM, PsbT, PsbX, PsbY, PsbZ, Psb30/Ycf12, at least 3 peripheral proteins of the oxygen-evolving complex and a large number of cofactors. It forms dimeric complexes.

The protein resides in the plastid. Its subcellular location is the chloroplast thylakoid membrane. Functionally, one of the components of the core complex of photosystem II (PSII). PSII is a light-driven water:plastoquinone oxidoreductase that uses light energy to abstract electrons from H(2)O, generating O(2) and a proton gradient subsequently used for ATP formation. It consists of a core antenna complex that captures photons, and an electron transfer chain that converts photonic excitation into a charge separation. This chain is Photosystem II reaction center protein J, found in Zea mays (Maize).